The sequence spans 505 residues: Cytochrome P450 4Z1 (505 aa).

The Cytoplasmic portion of the chain corresponds to 1–9; it reads MEPSWLQEL. A helical; Signal-anchor for type II membrane protein membrane pass occupies residues 10-30; it reads MAHPFLLLILLCMSLLLFQVI. Residues 31-505 lie on the Lumenal side of the membrane; sequence RLYQRRRWMI…GIHVFAKKVC (475 aa). Heme is bound at residue Cys452.

This sequence belongs to the cytochrome P450 family. The cofactor is heme. In terms of tissue distribution, preferentially detected in breast carcinoma tissue and mammary gland, whereas only marginal expression is found in all other tested tissues.

The protein localises to the endoplasmic reticulum membrane. It is found in the microsome membrane. It carries out the reaction an organic molecule + reduced [NADPH--hemoprotein reductase] + O2 = an alcohol + oxidized [NADPH--hemoprotein reductase] + H2O + H(+). The catalysed reaction is dodecanoate + reduced [NADPH--hemoprotein reductase] + O2 = 7-hydroxydodecanoate + oxidized [NADPH--hemoprotein reductase] + H2O + H(+). It catalyses the reaction dodecanoate + reduced [NADPH--hemoprotein reductase] + O2 = 8-hydroxydodecanoate + oxidized [NADPH--hemoprotein reductase] + H2O + H(+). The enzyme catalyses dodecanoate + reduced [NADPH--hemoprotein reductase] + O2 = 9-hydroxydodecanoate + oxidized [NADPH--hemoprotein reductase] + H2O + H(+). It carries out the reaction dodecanoate + reduced [NADPH--hemoprotein reductase] + O2 = 10-hydroxydodecanoate + oxidized [NADPH--hemoprotein reductase] + H2O + H(+). The catalysed reaction is dodecanoate + reduced [NADPH--hemoprotein reductase] + O2 = 11-hydroxydodecanoate + oxidized [NADPH--hemoprotein reductase] + H2O + H(+). It catalyses the reaction tetradecanoate + reduced [NADPH--hemoprotein reductase] + O2 = 9-hydroxytetradecanoate + oxidized [NADPH--hemoprotein reductase] + H2O + H(+). The enzyme catalyses tetradecanoate + reduced [NADPH--hemoprotein reductase] + O2 = 10-hydroxytetradecanoate + oxidized [NADPH--hemoprotein reductase] + H2O + H(+). It carries out the reaction tetradecanoate + reduced [NADPH--hemoprotein reductase] + O2 = 11-hydroxytetradecanoate + oxidized [NADPH--hemoprotein reductase] + H2O + H(+). The catalysed reaction is tetradecanoate + reduced [NADPH--hemoprotein reductase] + O2 = 12-hydroxytetradecanoate + oxidized [NADPH--hemoprotein reductase] + H2O + H(+). It catalyses the reaction (5Z,8Z,11Z,14Z)-eicosatetraenoate + reduced [NADPH--hemoprotein reductase] + O2 = (14S,15R)-epoxy-(5Z,8Z,11Z)-eicosatrienoate + oxidized [NADPH--hemoprotein reductase] + H2O + H(+). A cytochrome P450 monooxygenase that catalyzes the in-chain oxidation of fatty acids. Catalyzes the hydroxylation of carbon-hydrogen bonds. Hydroxylates lauric and myristic acids predominantly at the omega-4 and omega-2 positions, respectively. Catalyzes the epoxidation of double bonds of polyunsaturated fatty acids (PUFA). Displays an absolute stereoselectivity in the epoxidation of arachidonic acid producing the 14(S),15(R)-epoxyeicosatrienoic acid (EET) enantiomer. Mechanistically, uses molecular oxygen inserting one oxygen atom into a substrate, and reducing the second into a water molecule, with two electrons provided by NADPH via cytochrome P450 reductase (CPR; NADPH-ferrihemoprotein reductase). This chain is Cytochrome P450 4Z1, found in Homo sapiens (Human).